The primary structure comprises 120 residues: Transcription elongation factor SPT4 (120 aa).

The tract at residues 1–39 is interaction with spt-5; sequence MSASVPADLRNLRACLLCSLVKSVESFQKEGCENCEDVL. The C4-type zinc finger occupies 15-35; sequence CLLCSLVKSVESFQKEGCENC.

This sequence belongs to the SPT4 family. As to quaternary structure, interacts with spt-5 to form DSIF. DSIF interacts with RNA polymerase II and with the positive transcription elongation factor b complex (P-TEFb complex), which is composed of cdk-9 and cyclin-T (cit-1.1 or cit-1.2).

It localises to the nucleus. Functionally, may function as a component of the DRB sensitivity-inducing factor complex (DSIF complex), which regulates transcription elongation by RNA polymerase II. DSIF may enhance transcriptional pausing at sites proximal to the promoter, which may in turn facilitate the assembly of an elongation competent RNA polymerase II complex. This is Transcription elongation factor SPT4 (spt-4) from Caenorhabditis elegans.